The following is a 105-amino-acid chain: uncharacterized protein (105 aa).

The chain crosses the membrane as a helical span at residues 8–28 (FMTAGIIIALIIAVLAPFLAS). The segment at 32–53 (DGLESTAEKVMPNPETEPVLES) is disordered. A helical transmembrane segment spans residues 72–92 (VSMVIGTILVLAIAYGVGAVF).

The protein to M.jannaschii MJ1570.

It localises to the cell membrane. This is an uncharacterized protein from Methanothermobacter thermautotrophicus (strain ATCC 29096 / DSM 1053 / JCM 10044 / NBRC 100330 / Delta H) (Methanobacterium thermoautotrophicum).